The following is a 415-amino-acid chain: MNIIDLFAGCGGFSHGFKMAGYNSILAIEKDLWASQTYSFNNPNVSVITEDITTLDPGDLKISVSDVDGIIGGPPCQGFSLSGNRDQKDPRNSLFVDFVRFVKFFSPKFFVMENVLGILSMKTKSRQYVKDIIAEEFSNVGYKVCVIILNACDYGVPQSRQRVFFIGLKSDRPLNQQILTPPSKVIESEYTSLEEAISDLPVIEAGEGGEVQDYPVAPRNKYQENMRKGSTCVYNHVAMRHTQRLVDRFAAIKFGQSVKHVSEEHSQRKRGDANSISGKVFSQNNMRPYPYKPCPTVAASFQSNFIHPFYNRNFTAREGARIQSFPDTYIFQGKRTTMSWEKHLSQYQQIGNAVPPLLAQALAERISWYFENINLINDSNVSIKRMVQRSFMSQLNLENNVNVRQDDNYDKVHSF.

Residues 1–373 (MNIIDLFAGC…ERISWYFENI (373 aa)) form the SAM-dependent MTase C5-type domain. Cys76 is a catalytic residue.

It belongs to the class I-like SAM-binding methyltransferase superfamily. C5-methyltransferase family.

The enzyme catalyses a 2'-deoxycytidine in DNA + S-adenosyl-L-methionine = a 5-methyl-2'-deoxycytidine in DNA + S-adenosyl-L-homocysteine + H(+). In terms of biological role, a methylase that recognizes the double-stranded sequence 5'-CTNAG-3', methylates C-1 on both strands, and protects the DNA from cleavage by the DdeI endonuclease. The polypeptide is Type II methyltransferase M.DdeI (ddeIM) (Desulfomicrobium norvegicum (strain DSM 1741 / NCIMB 8310) (Desulfovibrio baculatus (strain Norway 4))).